We begin with the raw amino-acid sequence, 359 residues long: WW domain-binding protein wbp-11 (359 aa).

Disordered stretches follow at residues 1-38, 235-264, and 317-341; these read MPSISKTKSGERYRAPTDQARKMDRKKENKRNKKDRQQ, PSSYNSMPTRMPHHHHHHHPHASSHYNPMG, and PGDNKTIVPRQAAPVQRRPEVQKQA. Over residues 8-27 the composition is skewed to basic and acidic residues; sequence KSGERYRAPTDQARKMDRKK. Over residues 245–256 the composition is skewed to basic residues; that stretch reads MPHHHHHHHPHA.

In terms of biological role, activates pre-mRNA splicing. May inhibit PP1 phosphatase activity. This chain is WW domain-binding protein wbp-11, found in Caenorhabditis elegans.